The following is a 377-amino-acid chain: Pulmonary surfactant-associated protein B (377 aa).

Positions 1 to 22 (MAKSHLLQWLLLLPTLCCPGAA) are cleaved as a signal peptide. Positions 23-191 (ITSASSLECA…PHTQDFSEQQ (169 aa)) are excised as a propeptide. In terms of domain architecture, Saposin A-type spans 24–64 (TSASSLECAQGPQFWCQSLEHAVQCRALGHCLQEVWGHAGA). Saposin B-type domains are found at residues 64–146 (ANDL…PRGQ), 195–272 (PLPF…STED), and 291–366 (QDTE…EAPA). Intrachain disulfides connect C68/C142, C71/C136, C99/C111, C199/C268, C202/C262, C226/C237, C295/C362, C298/C356, and C321/C331. Positions 271-377 (EDAMGPALPA…PLQCFQTPHL (107 aa)) are excised as a propeptide. A glycan (N-linked (GlcNAc...) asparagine) is linked at N307.

Homodimer; disulfide-linked.

The protein localises to the secreted. Its subcellular location is the extracellular space. The protein resides in the surface film. Its function is as follows. Pulmonary surfactant-associated proteins promote alveolar stability by lowering the surface tension at the air-liquid interface in the peripheral air spaces. SP-B increases the collapse pressure of palmitic acid to nearly 70 millinewtons per meter. This chain is Pulmonary surfactant-associated protein B (Sftpb), found in Mus musculus (Mouse).